The sequence spans 338 residues: Ketol-acid reductoisomerase (NADP(+)) (338 aa).

Positions 1–181 (MKVYYDKDAD…GGTKGGVIET (181 aa)) constitute a KARI N-terminal Rossmann domain. NADP(+) contacts are provided by residues 24–27 (YGSQ), Arg-47, Ser-52, and 82–85 (DETQ). His-107 is a catalytic residue. Gly-133 contributes to the NADP(+) binding site. One can recognise a KARI C-terminal knotted domain in the interval 182–327 (SFREETETDL…AELRAMMPWI (146 aa)). 4 residues coordinate Mg(2+): Asp-190, Glu-194, Glu-226, and Glu-230. Ser-251 serves as a coordination point for substrate.

Belongs to the ketol-acid reductoisomerase family. Requires Mg(2+) as cofactor.

The catalysed reaction is (2R)-2,3-dihydroxy-3-methylbutanoate + NADP(+) = (2S)-2-acetolactate + NADPH + H(+). It carries out the reaction (2R,3R)-2,3-dihydroxy-3-methylpentanoate + NADP(+) = (S)-2-ethyl-2-hydroxy-3-oxobutanoate + NADPH + H(+). Its pathway is amino-acid biosynthesis; L-isoleucine biosynthesis; L-isoleucine from 2-oxobutanoate: step 2/4. The protein operates within amino-acid biosynthesis; L-valine biosynthesis; L-valine from pyruvate: step 2/4. Involved in the biosynthesis of branched-chain amino acids (BCAA). Catalyzes an alkyl-migration followed by a ketol-acid reduction of (S)-2-acetolactate (S2AL) to yield (R)-2,3-dihydroxy-isovalerate. In the isomerase reaction, S2AL is rearranged via a Mg-dependent methyl migration to produce 3-hydroxy-3-methyl-2-ketobutyrate (HMKB). In the reductase reaction, this 2-ketoacid undergoes a metal-dependent reduction by NADPH to yield (R)-2,3-dihydroxy-isovalerate. In Laribacter hongkongensis (strain HLHK9), this protein is Ketol-acid reductoisomerase (NADP(+)).